The chain runs to 340 residues: Glycerol-3-phosphate dehydrogenase [NAD(P)+] (340 aa).

NADPH is bound by residues serine 13, tryptophan 14, and lysine 108. Residues lysine 108, glycine 139, and serine 141 each coordinate sn-glycerol 3-phosphate. Alanine 143 contacts NADPH. Residues lysine 194, aspartate 247, serine 257, arginine 258, and asparagine 259 each contribute to the sn-glycerol 3-phosphate site. The Proton acceptor role is filled by lysine 194. Arginine 258 contributes to the NADPH binding site. Positions 282 and 284 each coordinate NADPH.

Belongs to the NAD-dependent glycerol-3-phosphate dehydrogenase family.

The protein resides in the cytoplasm. The enzyme catalyses sn-glycerol 3-phosphate + NAD(+) = dihydroxyacetone phosphate + NADH + H(+). The catalysed reaction is sn-glycerol 3-phosphate + NADP(+) = dihydroxyacetone phosphate + NADPH + H(+). Its pathway is membrane lipid metabolism; glycerophospholipid metabolism. Catalyzes the reduction of the glycolytic intermediate dihydroxyacetone phosphate (DHAP) to sn-glycerol 3-phosphate (G3P), the key precursor for phospholipid synthesis. This is Glycerol-3-phosphate dehydrogenase [NAD(P)+] from Streptococcus thermophilus (strain ATCC BAA-491 / LMD-9).